A 408-amino-acid polypeptide reads, in one-letter code: Phosphoglycerate kinase (408 aa).

Substrate is bound by residues 24 to 26 (DLN), arginine 39, 62 to 65 (HLGR), arginine 121, and arginine 161. ATP is bound by residues lysine 211, glycine 307, glutamate 338, and 364-367 (GGDS).

Belongs to the phosphoglycerate kinase family. As to quaternary structure, monomer.

Its subcellular location is the cytoplasm. It carries out the reaction (2R)-3-phosphoglycerate + ATP = (2R)-3-phospho-glyceroyl phosphate + ADP. The protein operates within carbohydrate degradation; glycolysis; pyruvate from D-glyceraldehyde 3-phosphate: step 2/5. The sequence is that of Phosphoglycerate kinase from Pseudarthrobacter chlorophenolicus (strain ATCC 700700 / DSM 12829 / CIP 107037 / JCM 12360 / KCTC 9906 / NCIMB 13794 / A6) (Arthrobacter chlorophenolicus).